The primary structure comprises 192 residues: ATP-dependent Clp protease proteolytic subunit 1 (192 aa).

S92 acts as the Nucleophile in catalysis. H117 is a catalytic residue.

Belongs to the peptidase S14 family. Fourteen ClpP subunits assemble into 2 heptameric rings which stack back to back to give a disk-like structure with a central cavity, resembling the structure of eukaryotic proteasomes.

The protein resides in the cytoplasm. It carries out the reaction Hydrolysis of proteins to small peptides in the presence of ATP and magnesium. alpha-casein is the usual test substrate. In the absence of ATP, only oligopeptides shorter than five residues are hydrolyzed (such as succinyl-Leu-Tyr-|-NHMec, and Leu-Tyr-Leu-|-Tyr-Trp, in which cleavage of the -Tyr-|-Leu- and -Tyr-|-Trp bonds also occurs).. Its function is as follows. Cleaves peptides in various proteins in a process that requires ATP hydrolysis. Has a chymotrypsin-like activity. Plays a major role in the degradation of misfolded proteins. The sequence is that of ATP-dependent Clp protease proteolytic subunit 1 from Chlamydia trachomatis serovar D (strain ATCC VR-885 / DSM 19411 / UW-3/Cx).